Consider the following 263-residue polypeptide: Aminoglycoside 3'-phosphotransferase (263 aa).

Asp-189 serves as the catalytic Proton acceptor.

The protein belongs to the aminoglycoside phosphotransferase family.

The enzyme catalyses kanamycin A + ATP = kanamycin 3'-phosphate + ADP + H(+). Functionally, resistance to kanamycin and structurally-related aminoglycosides, including amikacin. This chain is Aminoglycoside 3'-phosphotransferase (aphA), found in Staphylococcus aureus.